Consider the following 387-residue polypeptide: Phosphoglycerate kinase (387 aa).

Residues 21–23, Arg-36, 59–62, Arg-113, and Arg-146 contribute to the substrate site; these read DLN and HLGR. Residues Lys-197, Glu-314, and 340–343 contribute to the ATP site; that span reads GGDT.

The protein belongs to the phosphoglycerate kinase family. As to quaternary structure, monomer.

It localises to the cytoplasm. It catalyses the reaction (2R)-3-phosphoglycerate + ATP = (2R)-3-phospho-glyceroyl phosphate + ADP. It functions in the pathway carbohydrate degradation; glycolysis; pyruvate from D-glyceraldehyde 3-phosphate: step 2/5. The chain is Phosphoglycerate kinase from Photorhabdus laumondii subsp. laumondii (strain DSM 15139 / CIP 105565 / TT01) (Photorhabdus luminescens subsp. laumondii).